We begin with the raw amino-acid sequence, 1022 residues long: Protein translocase subunit SECA1, chloroplastic (1022 aa).

The transit peptide at 1 to 72 directs the protein to the chloroplast; the sequence is MVSPLCDSQL…SRKRSTSVNA (72 aa). S73 bears the N-acetylserine mark. ATP is bound at residue 176-183; it reads MRTGEGKT. The tract at residues 985-1022 is disordered; that stretch reads KDEEKKSQNGKPSKQVDNASEKPKQVGVTDEPSSIASA. The segment covering 993-1002 has biased composition (polar residues); that stretch reads NGKPSKQVDN.

The protein belongs to the SecA family. As to quaternary structure, part of the Sec protein translocation apparatus. Interacts probably with SCY1. In terms of tissue distribution, expressed in green tissues, including cotyledons, rosette and cauline leaves, and sepals. Also detected at the base and the tip of the trichome.

The protein resides in the plastid. Its subcellular location is the chloroplast stroma. The protein localises to the chloroplast thylakoid membrane. It catalyses the reaction ATP + H2O + chloroplast-proteinSide 1 = ADP + phosphate + chloroplast-proteinSide 2.. Its function is as follows. Has a central role in coupling the hydrolysis of ATP to the transfer of proteins across the thylakoid membrane. Involved in photosynthetic acclimation and required for chloroplast biogenesis. This is Protein translocase subunit SECA1, chloroplastic from Arabidopsis thaliana (Mouse-ear cress).